Reading from the N-terminus, the 1118-residue chain is Protein SUPPRESSOR OF NPR1-1 CONSTITUTIVE 4 (1118 aa).

The N-terminal stretch at Met-1 to Asp-35 is a signal peptide. Residues Ala-36 to Arg-751 are Extracellular-facing. The GP-PDE 1 domain maps to Pro-51–Val-353. N-linked (GlcNAc...) asparagine glycans are attached at residues Asn-106, Asn-195, Asn-251, Asn-260, Asn-318, Asn-335, Asn-362, Asn-422, Asn-433, Asn-497, Asn-557, Asn-573, and Asn-656. Residues Phe-369–Lys-670 enclose the GP-PDE 2 domain. Residues Ile-752 to Cys-772 form a helical membrane-spanning segment. Residues Phe-773–Gly-1118 are Cytoplasmic-facing. Positions Lys-805 to Leu-1094 constitute a Protein kinase domain. ATP is bound by residues Val-811–Val-819 and Lys-833. Asp-928 (proton acceptor) is an active-site residue.

It in the N-terminal section; belongs to the glycerophosphoryl diester phosphodiesterase family. The protein in the C-terminal section; belongs to the protein kinase superfamily. Ser/Thr protein kinase family. Expressed in shoots, rosette and cauline leaves, stems, flowers and siliques.

Its subcellular location is the cell membrane. It catalyses the reaction a sn-glycero-3-phosphodiester + H2O = an alcohol + sn-glycerol 3-phosphate + H(+). The catalysed reaction is L-seryl-[protein] + ATP = O-phospho-L-seryl-[protein] + ADP + H(+). The enzyme catalyses L-threonyl-[protein] + ATP = O-phospho-L-threonyl-[protein] + ADP + H(+). In terms of biological role, atypical receptor-like kinase involved in disease resistance. This is Protein SUPPRESSOR OF NPR1-1 CONSTITUTIVE 4 from Arabidopsis thaliana (Mouse-ear cress).